The chain runs to 114 residues: Small ribosomal subunit protein uS13m (114 aa).

A disordered region spans residues 92–114 (DGLPLRGQRSHTNARTSRKRIRK).

It belongs to the universal ribosomal protein uS13 family. In terms of assembly, part of the small ribosomal subunit.

The protein resides in the mitochondrion. Its function is as follows. Located at the top of the head of the small subunit, it contacts several helices of the 18S rRNA. This Oenothera berteroana (Bertero's evening primrose) protein is Small ribosomal subunit protein uS13m (RPS13).